The chain runs to 49 residues: Large ribosomal subunit protein bL33 (49 aa).

Belongs to the bacterial ribosomal protein bL33 family.

The sequence is that of Large ribosomal subunit protein bL33 from Clostridium botulinum (strain Alaska E43 / Type E3).